We begin with the raw amino-acid sequence, 122 residues long: Small ribosomal subunit protein uS13 (122 aa).

Positions 99–122 (RGQRTHTNARTRKGPAKAIAGKKK) are disordered.

The protein belongs to the universal ribosomal protein uS13 family. In terms of assembly, part of the 30S ribosomal subunit. Forms a loose heterodimer with protein S19. Forms two bridges to the 50S subunit in the 70S ribosome.

In terms of biological role, located at the top of the head of the 30S subunit, it contacts several helices of the 16S rRNA. In the 70S ribosome it contacts the 23S rRNA (bridge B1a) and protein L5 of the 50S subunit (bridge B1b), connecting the 2 subunits; these bridges are implicated in subunit movement. Contacts the tRNAs in the A and P-sites. The protein is Small ribosomal subunit protein uS13 of Cereibacter sphaeroides (strain ATCC 17029 / ATH 2.4.9) (Rhodobacter sphaeroides).